Here is a 186-residue protein sequence, read N- to C-terminus: Threonylcarbamoyl-AMP synthase (186 aa).

The region spanning 6–186 is the YrdC-like domain; that stretch reads GFRLRLAANA…FDAMSGRRIR (181 aa).

Belongs to the SUA5 family. TsaC subfamily.

It localises to the cytoplasm. The catalysed reaction is L-threonine + hydrogencarbonate + ATP = L-threonylcarbamoyladenylate + diphosphate + H2O. Required for the formation of a threonylcarbamoyl group on adenosine at position 37 (t(6)A37) in tRNAs that read codons beginning with adenine. Catalyzes the conversion of L-threonine, HCO(3)(-)/CO(2) and ATP to give threonylcarbamoyl-AMP (TC-AMP) as the acyladenylate intermediate, with the release of diphosphate. This chain is Threonylcarbamoyl-AMP synthase, found in Methylococcus capsulatus (strain ATCC 33009 / NCIMB 11132 / Bath).